The sequence spans 424 residues: Hemagglutinin-esterase (424 aa).

The first 16 residues, 1-16, serve as a signal peptide directing secretion; it reads MFLLPRFVLVSCIIGS. The interval 7 to 127 is esterase domain 1; that stretch reads FVLVSCIIGS…SNDIWMQNKG (121 aa). At 17–392 the chain is on the virion surface side; that stretch reads LGFDNPPTNV…PICVYDPLPI (376 aa). Serine 40 acts as the Nucleophile in catalysis. A disulfide bond links cysteine 44 and cysteine 65. Asparagine 54, asparagine 89, asparagine 153, asparagine 236, and asparagine 301 each carry an N-linked (GlcNAc...) asparagine; by host glycan. 3 disulfides stabilise this stretch: cysteine 113-cysteine 162, cysteine 197-cysteine 276, and cysteine 205-cysteine 249. The segment at 128–266 is receptor binding; sequence LFYTQVYKNM…GNYLAISNEL (139 aa). An esterase domain 2 region spans residues 267–379; the sequence is LLTVPTKAIC…RCPTAADINT (113 aa). A disulfide bridge links cysteine 307 with cysteine 312. An N-linked (GlcNAc...) asparagine; by host glycan is attached at asparagine 316. Catalysis depends on charge relay system residues aspartate 326 and histidine 329. Cysteine 347 and cysteine 371 are oxidised to a cystine. Asparagine 358 carries an N-linked (GlcNAc...) asparagine; by host glycan. A helical transmembrane segment spans residues 393 to 413; sequence ILLGILLSVAVIIIVVLLLYF. Topologically, residues 414–424 are intravirion; that stretch reads MVDNGTRLHDA. A glycan (N-linked (GlcNAc...) asparagine; by host) is linked at asparagine 417.

This sequence belongs to the influenza type C/coronaviruses hemagglutinin-esterase family. Homodimer; disulfide-linked. Forms a complex with the M protein in the pre-Golgi. Associates then with S-M complex to form a ternary complex S-M-HE. In terms of processing, N-glycosylated in the host RER.

It is found in the virion membrane. Its subcellular location is the host cell membrane. It carries out the reaction N-acetyl-9-O-acetylneuraminate + H2O = N-acetylneuraminate + acetate + H(+). The enzyme catalyses N-acetyl-4-O-acetylneuraminate + H2O = N-acetylneuraminate + acetate + H(+). In terms of biological role, structural protein that makes short spikes at the surface of the virus. Contains receptor binding and receptor-destroying activities. Mediates de-O-acetylation of N-acetyl-4-O-acetylneuraminic acid, which is probably the receptor determinant recognized by the virus on the surface of erythrocytes and susceptible cells. This receptor-destroying activity is important for virus release as it probably helps preventing self-aggregation and ensures the efficient spread of the progeny virus from cell to cell. May serve as a secondary viral attachment protein for initiating infection, the spike protein being the major one. May become a target for both the humoral and the cellular branches of the immune system. The polypeptide is Hemagglutinin-esterase (Bos taurus (Bovine)).